The chain runs to 317 residues: Cytochrome f (317 aa).

The signal sequence occupies residues 1 to 34 (MINFKKQIMKKTTFFLCAMLLVSSILIAPRSSLA). Heme contacts are provided by tyrosine 35, cysteine 55, cysteine 58, and histidine 59. Residues 284 to 304 (IIGLIAFFIGVGLTQILLVLK) traverse the membrane as a helical segment.

Belongs to the cytochrome f family. The 4 large subunits of the cytochrome b6-f complex are cytochrome b6, subunit IV (17 kDa polypeptide, PetD), cytochrome f and the Rieske protein, while the 4 small subunits are PetG, PetL, PetM and PetN. The complex functions as a dimer. It depends on heme as a cofactor.

The protein localises to the cellular thylakoid membrane. Its function is as follows. Component of the cytochrome b6-f complex, which mediates electron transfer between photosystem II (PSII) and photosystem I (PSI), cyclic electron flow around PSI, and state transitions. The protein is Cytochrome f of Prochlorococcus marinus (strain MIT 9515).